A 119-amino-acid polypeptide reads, in one-letter code: Large ribosomal subunit protein bL20 (119 aa).

It belongs to the bacterial ribosomal protein bL20 family.

Binds directly to 23S ribosomal RNA and is necessary for the in vitro assembly process of the 50S ribosomal subunit. It is not involved in the protein synthesizing functions of that subunit. This chain is Large ribosomal subunit protein bL20, found in Bradyrhizobium diazoefficiens (strain JCM 10833 / BCRC 13528 / IAM 13628 / NBRC 14792 / USDA 110).